Consider the following 217-residue polypeptide: Ribonuclease T (217 aa).

The Exonuclease domain maps to 20–195 (VVVDVETAGL…YDTERTAMLF (176 aa)). 4 residues coordinate Mg(2+): Asp23, Glu25, His182, and Asp187. The active-site Proton donor/acceptor is His182.

It belongs to the RNase T family. As to quaternary structure, homodimer. Mg(2+) serves as cofactor.

Its function is as follows. Trims short 3' overhangs of a variety of RNA species, leaving a one or two nucleotide 3' overhang. Responsible for the end-turnover of tRNA: specifically removes the terminal AMP residue from uncharged tRNA (tRNA-C-C-A). Also appears to be involved in tRNA biosynthesis. The sequence is that of Ribonuclease T from Blochmanniella pennsylvanica (strain BPEN).